The sequence spans 103 residues: Histone H4.2 (103 aa).

Over residues 1–14 the composition is skewed to gly residues; that stretch reads MSGRGKGGKGLGKG. Positions 1–20 are disordered; it reads MSGRGKGGKGLGKGGAKRHR. K6 carries the N6-acetyl-N6-methyllysine; alternate modification. An N6-methyllysine; alternate mark is found at K6, K9, and K13. K13 carries the N6-acetyl-N6-methyllysine; alternate modification. Residues 17–21 mediate DNA binding; the sequence is KRHRK. K92 bears the N6-glutaryllysine mark.

This sequence belongs to the histone H4 family. The nucleosome is a histone octamer containing two molecules each of H2A, H2B, H3 and H4 assembled in one H3-H4 heterotetramer and two H2A-H2B heterodimers. The octamer wraps approximately 147 bp of DNA. Post-translationally, glutarylation at Lys-92 (H4K91glu) destabilizes nucleosomes by promoting dissociation of the H2A-H2B dimers from nucleosomes.

The protein localises to the nucleus. It localises to the chromosome. Core component of nucleosome. Nucleosomes wrap and compact DNA into chromatin, limiting DNA accessibility to the cellular machineries which require DNA as a template. Histones thereby play a central role in transcription regulation, DNA repair, DNA replication and chromosomal stability. DNA accessibility is regulated via a complex set of post-translational modifications of histones, also called histone code, and nucleosome remodeling. The protein is Histone H4.2 (hhfB) of Emericella nidulans (strain FGSC A4 / ATCC 38163 / CBS 112.46 / NRRL 194 / M139) (Aspergillus nidulans).